The primary structure comprises 251 residues: tRNA (guanine-N(1)-)-methyltransferase (251 aa).

Residues Gly113 and 133 to 138 (IGDYVL) each bind S-adenosyl-L-methionine.

This sequence belongs to the RNA methyltransferase TrmD family. Homodimer.

It is found in the cytoplasm. It catalyses the reaction guanosine(37) in tRNA + S-adenosyl-L-methionine = N(1)-methylguanosine(37) in tRNA + S-adenosyl-L-homocysteine + H(+). Specifically methylates guanosine-37 in various tRNAs. The polypeptide is tRNA (guanine-N(1)-)-methyltransferase (Methylococcus capsulatus (strain ATCC 33009 / NCIMB 11132 / Bath)).